Reading from the N-terminus, the 87-residue chain is Small ribosomal subunit protein bS20 (87 aa).

Residues 1–22 (MAHHKSAIKRIKQNAKKNARNR) are disordered.

Belongs to the bacterial ribosomal protein bS20 family.

Binds directly to 16S ribosomal RNA. This Pelobacter propionicus (strain DSM 2379 / NBRC 103807 / OttBd1) protein is Small ribosomal subunit protein bS20.